The following is a 558-amino-acid chain: Urocanate hydratase (558 aa).

Residues 53-54, Gln131, 177-179, Glu197, Arg202, 243-244, 264-268, 274-275, and Tyr323 each bind NAD(+); these read GG, GMG, NA, QTSAH, and YL. Cys411 is an active-site residue. Gly493 contributes to the NAD(+) binding site.

This sequence belongs to the urocanase family. NAD(+) is required as a cofactor.

It is found in the cytoplasm. It catalyses the reaction 4-imidazolone-5-propanoate = trans-urocanate + H2O. It participates in amino-acid degradation; L-histidine degradation into L-glutamate; N-formimidoyl-L-glutamate from L-histidine: step 2/3. In terms of biological role, catalyzes the conversion of urocanate to 4-imidazolone-5-propionate. The protein is Urocanate hydratase of Idiomarina loihiensis (strain ATCC BAA-735 / DSM 15497 / L2-TR).